Reading from the N-terminus, the 442-residue chain is tRNA modification GTPase MnmE (442 aa).

3 residues coordinate (6S)-5-formyl-5,6,7,8-tetrahydrofolate: Arg-24, Glu-82, and Lys-120. One can recognise a TrmE-type G domain in the interval 217 to 367 (GLHIVITGEP…LISLIKEKAE (151 aa)). Residues 227–232 (NVGKST), 246–252 (SEYAGTT), and 271–274 (DTAG) each bind GTP. The Mg(2+) site is built by Ser-231 and Thr-252. A (6S)-5-formyl-5,6,7,8-tetrahydrofolate-binding site is contributed by Lys-442.

The protein belongs to the TRAFAC class TrmE-Era-EngA-EngB-Septin-like GTPase superfamily. TrmE GTPase family. As to quaternary structure, homodimer. Heterotetramer of two MnmE and two MnmG subunits. K(+) is required as a cofactor.

It localises to the cytoplasm. Functionally, exhibits a very high intrinsic GTPase hydrolysis rate. Involved in the addition of a carboxymethylaminomethyl (cmnm) group at the wobble position (U34) of certain tRNAs, forming tRNA-cmnm(5)s(2)U34. This is tRNA modification GTPase MnmE from Wolbachia sp. subsp. Drosophila simulans (strain wRi).